The chain runs to 455 residues: MIKSRFAPSPTGYLHIGGARTAFFAWIWAKKQHGKFVLRIENTDLERSTQASVDAILQGIDWLGLNYDEGPLYQTDRFDRYKQIIQQLLDEKKAYYCECSKKRLQILREELTKQGKKAKYDGCCRNKNLHTGVVRFNNPKEGIVVFNDVVKGKISINNQELDDLIIARSDNTPTYNLTVVVDDHDMKINIIIRGDDHINNTPKQINLYQALGWHLPEFAHLPMILGNDGIRLSKRHGAVSIMAYRDAGFLPEALLNYLSRLGWSYGNQEIFSINKIVQLFELKNINKASASFNQDKLLWFNQETIKSSSVKNLLSNLTWHLQNQEIIIKDTPNIEIVVRYLQDRCKTLVNMAGELKMFYQDFDTFDEKLAKKFFKDKTPLKRLFVELEMLNTWKADNIKQVVKQVCFELNIGFGRVGQPFRLALSGDGNAGSIDIVAELVGKNKALLRLKMAIDF.

Positions 8–18 (PSPTGYLHIGG) match the 'HIGH' region motif. Positions 231–235 (RLSKR) match the 'KMSKS' region motif. Lysine 234 is a binding site for ATP.

Belongs to the class-I aminoacyl-tRNA synthetase family. Glutamate--tRNA ligase type 1 subfamily. Monomer.

The protein resides in the cytoplasm. It carries out the reaction tRNA(Glu) + L-glutamate + ATP = L-glutamyl-tRNA(Glu) + AMP + diphosphate. Catalyzes the attachment of glutamate to tRNA(Glu) in a two-step reaction: glutamate is first activated by ATP to form Glu-AMP and then transferred to the acceptor end of tRNA(Glu). This Vesicomyosocius okutanii subsp. Calyptogena okutanii (strain HA) protein is Glutamate--tRNA ligase.